Reading from the N-terminus, the 461-residue chain is Cysteine--tRNA ligase (461 aa).

Cysteine 28 provides a ligand contact to Zn(2+). Positions 30 to 40 (ITVYDLCHIGH) match the 'HIGH' region motif. Positions 209, 234, and 238 each coordinate Zn(2+). The short motif at 266-270 (KMSKS) is the 'KMSKS' region element. Lysine 269 is an ATP binding site.

Belongs to the class-I aminoacyl-tRNA synthetase family. As to quaternary structure, monomer. Zn(2+) is required as a cofactor.

The protein localises to the cytoplasm. The catalysed reaction is tRNA(Cys) + L-cysteine + ATP = L-cysteinyl-tRNA(Cys) + AMP + diphosphate. The chain is Cysteine--tRNA ligase from Pectobacterium carotovorum subsp. carotovorum (strain PC1).